We begin with the raw amino-acid sequence, 936 residues long: Protein translocase subunit SecA (936 aa).

ATP contacts are provided by residues Gln-87, 105–109 (GEGKT), and Asp-515. Zn(2+)-binding residues include Cys-920, Cys-922, Cys-931, and His-932.

This sequence belongs to the SecA family. Monomer and homodimer. Part of the essential Sec protein translocation apparatus which comprises SecA, SecYEG and auxiliary proteins SecDF-YajC and YidC. It depends on Zn(2+) as a cofactor.

The protein localises to the cell inner membrane. It localises to the cytoplasm. It catalyses the reaction ATP + H2O + cellular proteinSide 1 = ADP + phosphate + cellular proteinSide 2.. Part of the Sec protein translocase complex. Interacts with the SecYEG preprotein conducting channel. Has a central role in coupling the hydrolysis of ATP to the transfer of proteins into and across the cell membrane, serving both as a receptor for the preprotein-SecB complex and as an ATP-driven molecular motor driving the stepwise translocation of polypeptide chains across the membrane. This is Protein translocase subunit SecA from Paraburkholderia xenovorans (strain LB400).